Consider the following 303-residue polypeptide: Bidirectional sugar transporter SWEET14 (303 aa).

The Extracellular portion of the chain corresponds to 1–9; sequence MAGMSLQHP. Residues 10–30 traverse the membrane as a helical segment; that stretch reads WAFAFGLLGNIISFMTYLAPL. Residues 13-98 enclose the MtN3/slv 1 domain; the sequence is AFGLLGNIIS…AVYLVYAPKK (86 aa). At 31–44 the chain is on the cytoplasmic side; the sequence is PTFYRIYKSKSTQG. Residues 45–65 form a helical membrane-spanning segment; that stretch reads FQSVPYVVALFSAMLWIYYAL. The Extracellular segment spans residues 66-72; it reads LKSDECL. The helical transmembrane segment at 73–93 threads the bilayer; it reads LITINSAGCVIETIYIAVYLV. The Cytoplasmic segment spans residues 94–105; it reads YAPKKAKMFTAK. The chain crosses the membrane as a helical span at residues 106–126; that stretch reads LLLLVNVGVFGLILLLTLLLS. Over 127–133 the chain is Extracellular; it reads AGDRRIV. Residues 134-154 traverse the membrane as a helical segment; that stretch reads VLGWVCVGFSVSVFVAPLSII. In terms of domain architecture, MtN3/slv 2 spans 134–217; it reads VLGWVCVGFS…MGLYAMYRNS (84 aa). Topologically, residues 155–167 are cytoplasmic; the sequence is RLVVRTKSVEFMP. A helical membrane pass occupies residues 168–188; that stretch reads FSLSFSLTISAVVWFLYGLLI. Residues 189 to 192 are Extracellular-facing; that stretch reads KDKY. The chain crosses the membrane as a helical span at residues 193-213; the sequence is VALPNVLGFSFGVIQMGLYAM. Topologically, residues 214-303 are cytoplasmic; it reads YRNSTPKAVL…AGAGEKKVAA (90 aa). A disordered region spans residues 266 to 290; sequence HPVDVESPPAEAPPEEDDKAAAATA.

The protein belongs to the SWEET sugar transporter family. In terms of assembly, forms homooligomers and/or heterooligomers.

Its subcellular location is the cell membrane. Functionally, mediates both low-affinity uptake and efflux of sugar across the plasma membrane. Confers blight susceptibility. Confers TAL effector-mediated susceptibility to Xanthomonas oryzae pv. oryzae. This is Bidirectional sugar transporter SWEET14 (SWEET14) from Oryza sativa subsp. japonica (Rice).